The chain runs to 97 residues: Nuclear protein 2 (97 aa).

Residues 76-97 (LLNGQRKRRQRQLHPKMRTRLT) are disordered. A compositionally biased stretch (basic residues) spans 80–97 (QRKRRQRQLHPKMRTRLT).

This sequence belongs to the NUPR family.

Its subcellular location is the nucleus. Its function is as follows. Acts as a transcriptional repressor by inhibiting gene expression at the NUPR1 promoter in a p53/TP53-dependent manner in cancer cells. Involved in the G1 cell cycle arrest, and in a decrease in cell viability and cell proliferation. Plays a role as a negative regulator of the protumoral factor NUPR1. This Homo sapiens (Human) protein is Nuclear protein 2.